Here is a 523-residue protein sequence, read N- to C-terminus: DNA-directed primase/polymerase protein (523 aa).

Substrate contacts are provided by residues R78, 117–119 (DLE), and 168–172 (KFSHH). Residues D117 and E119 each coordinate Mn(2+). The tract at residues 203–230 (LKKSNPEAPGENRDDVEGTQAKRRKTEE) is disordered. Substrate is bound by residues 258–261 (RNFR) and K267. 4 residues coordinate Zn(2+): C390, H397, C417, and C422. Positions 390–423 (CHNVKRFHKSNNIIIVVDLKEEVWYQKCHDPECR) match the Zinc knuckle motif motif. Residues 467–477 (APAESTSTTPS) show a composition bias toward low complexity. The disordered stretch occupies residues 467–523 (APAESTSTTPSEDTEGWGDWPDDPAYLRALQEVEEEEEDEDEEVPDELLLQAVNECE). Composition is skewed to acidic residues over residues 478–488 (EDTEGWGDWPD) and 498–512 (EVEEEEEDEDEEVPD).

This sequence belongs to the eukaryotic-type primase small subunit family. It depends on Mn(2+) as a cofactor.

Its subcellular location is the nucleus. It localises to the mitochondrion matrix. It is found in the chromosome. The enzyme catalyses ssDNA + n NTP = ssDNA/pppN(pN)n-1 hybrid + (n-1) diphosphate.. It carries out the reaction DNA(n) + a 2'-deoxyribonucleoside 5'-triphosphate = DNA(n+1) + diphosphate. Its function is as follows. DNA primase and DNA polymerase required to tolerate replication-stalling lesions by bypassing them. Required to facilitate mitochondrial and nuclear replication fork progression by initiating de novo DNA synthesis using dNTPs and acting as an error-prone DNA polymerase able to bypass certain DNA lesions. Shows a high capacity to tolerate DNA damage lesions such as 8oxoG and abasic sites in DNA. Provides different translesion synthesis alternatives when DNA replication is stalled: able to synthesize DNA primers downstream of lesions, such as UV lesions, R-loops and G-quadruplexes, to allow DNA replication to continue. Can also realign primers ahead of 'unreadable lesions' such as abasic sites and 6-4 photoproduct (6-4 pyrimidine-pyrimidinone), thereby skipping the lesion. Repriming avoids fork degradation while leading to accumulation of internal ssDNA gaps behind the forks. Also able to incorporate nucleotides opposite DNA lesions such as 8oxoG, like a regular translesion synthesis DNA polymerase. Also required for reinitiating stalled forks after ultraviolet (UV) damage during nuclear DNA replication. Required for mitochondrial DNA (mtDNA) synthesis and replication, by reinitiating synthesis after UV damage or in the presence of chain-terminating nucleotides. In addition to its role in DNA damage response, also required to maintain efficient nuclear and mitochondrial DNA replication in unperturbed cells. This Danio rerio (Zebrafish) protein is DNA-directed primase/polymerase protein.